Here is a 347-residue protein sequence, read N- to C-terminus: Probable 3-hydroxyisobutyrate dehydrogenase, mitochondrial (347 aa).

The transit peptide at 1-34 (MAIRRAQTLLCLSKFKTNFVSGSLHRFSSSSQNS) directs the protein to the mitochondrion. NAD(+)-binding positions include 38–67 (QNVG…TVHD), 101–102 (LP), and T134. K219 is a catalytic residue. K294 contacts NAD(+).

This sequence belongs to the HIBADH-related family. 3-hydroxyisobutyrate dehydrogenase subfamily.

The protein localises to the mitochondrion. It carries out the reaction 3-hydroxy-2-methylpropanoate + NAD(+) = 2-methyl-3-oxopropanoate + NADH + H(+). The protein operates within amino-acid degradation; L-valine degradation. The protein is Probable 3-hydroxyisobutyrate dehydrogenase, mitochondrial of Arabidopsis thaliana (Mouse-ear cress).